The primary structure comprises 109 residues: ATPase inhibitor, mitochondrial (109 aa).

Residues 1–25 (MAATALAARTRQAVWSVWAMQGRGF) constitute a mitochondrion transit peptide. Residues 26 to 52 (GSESGDNVRSSAGAVRDAGGAFGKREQ) are disordered. Positions 26 to 52 (GSESGDNVRSSAGAVRDAGGAFGKREQ) are N-terminal inhibitory region. Residues 69 to 109 (ALKKHHENEISHHAKEIERLQKEIERHKQSIKKLKQSEDDD) are a coiled coil. Residues 74-106 (HENEISHHAKEIERLQKEIERHKQSIKKLKQSE) are antiparallel alpha-helical coiled coil region. Lysine 103 is modified (N6-succinyllysine).

This sequence belongs to the ATPase inhibitor family. Homodimer; represents the active form and is present at a pH value below 6.5. Homotetramer; represents the inactive form and is present at a pH value above 7.0.

It localises to the mitochondrion. Functionally, endogenous F(1)F(o)-ATPase inhibitor limiting ATP depletion when the mitochondrial membrane potential falls below a threshold and the F(1)F(o)-ATP synthase starts hydrolyzing ATP to pump protons out of the mitochondrial matrix. Required to avoid the consumption of cellular ATP when the F(1)F(o)-ATP synthase enzyme acts as an ATP hydrolase. Indirectly acts as a regulator of heme synthesis in erythroid tissues: regulates heme synthesis by modulating the mitochondrial pH and redox potential, allowing FECH to efficiently catalyze the incorporation of iron into protoporphyrin IX to produce heme. This is ATPase inhibitor, mitochondrial from Bos taurus (Bovine).